Consider the following 766-residue polypeptide: Subtilisin-like protease SBT3.13 (766 aa).

Residues 1–21 (MNNSLQSSKLVLLLAIALVLF) form the signal peptide. The propeptide at 22–120 (LNTELDFLTA…VIPNRIRKLK (99 aa)) is activation peptide. One can recognise an Inhibitor I9 domain in the interval 41–119 (VYIVYLGERE…HVIPNRIRKL (79 aa)). The region spanning 134 to 618 (PTSFSSLSSV…GGLVNPEKAA (485 aa)) is the Peptidase S8 domain. Asp-162 serves as the catalytic Charge relay system. Asn-195 and Asn-223 each carry an N-linked (GlcNAc...) asparagine glycan. His-239 acts as the Charge relay system in catalysis. Residues Asn-254 and Asn-389 are each glycosylated (N-linked (GlcNAc...) asparagine). Ser-549 functions as the Charge relay system in the catalytic mechanism. A glycan (N-linked (GlcNAc...) asparagine) is linked at Asn-641.

It belongs to the peptidase S8 family.

It is found in the secreted. In Arabidopsis thaliana (Mouse-ear cress), this protein is Subtilisin-like protease SBT3.13.